We begin with the raw amino-acid sequence, 933 residues long: uncharacterized protein (933 aa).

Residues 244–255 (KKDIGAKPKPVD) are compositionally biased toward basic and acidic residues. Disordered stretches follow at residues 244-277 (KKDI…ELPD) and 343-364 (SAPH…EWKG). The span at 343-353 (SAPHQPSSQHA) shows a compositional bias: polar residues. A helical membrane pass occupies residues 771–791 (VIHGMVLMFAGGKLLFGGCVL). Residues 890-907 (DKIEKEPPPSPEKVKPPE) are compositionally biased toward basic and acidic residues. Residues 890–933 (DKIEKEPPPSPEKVKPPEIELQPFTKMRRSSKKTAGFKKLNSKK) form a disordered region. Positions 915 to 933 (KMRRSSKKTAGFKKLNSKK) are enriched in basic residues.

The protein localises to the membrane. This is an uncharacterized protein from Mus musculus (Mouse).